Consider the following 147-residue polypeptide: Large ribosomal subunit protein bL9 (147 aa).

The protein belongs to the bacterial ribosomal protein bL9 family.

Its function is as follows. Binds to the 23S rRNA. The sequence is that of Large ribosomal subunit protein bL9 from Mesoplasma florum (strain ATCC 33453 / NBRC 100688 / NCTC 11704 / L1) (Acholeplasma florum).